Here is a 35-residue protein sequence, read N- to C-terminus: Kappa-theraphotoxin-Tb1b (35 aa).

3 disulfides stabilise this stretch: Cys3-Cys18, Cys10-Cys23, and Cys17-Cys30.

Belongs to the neurotoxin 10 (Hwtx-1) family. 58 subfamily. As to quaternary structure, monomer. Expressed by the venom gland.

It is found in the secreted. Its function is as follows. Low-affinity blocker of Kv4.2/KCND2 voltage-gated potassium channels. Is presumed to shift the voltage-dependence of channel activation to more depolarized potentials and to bind to the S3-S4 linker region of the voltage sensor domain. The protein is Kappa-theraphotoxin-Tb1b of Theraphosa blondi (Goliath birdeating spider).